We begin with the raw amino-acid sequence, 324 residues long: Putative transcription factor sel-7 (324 aa).

Residues 67–85 (SPPQTVISEAPPQSFTPSA) show a composition bias toward polar residues. Residues 67–151 (SPPQTVISEA…DEKVLADGPF (85 aa)) form a disordered region. Low complexity predominate over residues 86-98 (TNSTSDKTSSSLK). Residues 106-123 (SDGDLDMEGEEDTEELFD) are compositionally biased toward acidic residues. The segment covering 124-133 (NESQPSQRNQ) has biased composition (polar residues). Positions 134–146 (SPKETEVEDEKVL) are enriched in basic and acidic residues.

As to quaternary structure, multimer. May interact with mediator complex subunit mdt-29. As to expression, widely expressed, including in pharyngeal muscle cells and body wall muscle cells.

It is found in the nucleus. Its function is as follows. Putative transcription factor. Positive regulator of the lin-12/Notch signaling pathway. Binds to specific DNA sequences in regulatory elements. Involved in cell fate decisions that require cell-cell interactions, such as the anchor cell (AC) / ventral uterine (VU) precursor cell fate decision. Heterochronic protein which controls the choice of stage specific cell fates, including the larval L3 stage-specific fate of seam cells. Involved in regulating the temporal expression pattern of hunchback-like protein hbl-1, thereby playing a role in the progression between larval stages L2 and L3. The chain is Putative transcription factor sel-7 from Caenorhabditis elegans.